The chain runs to 185 residues: Ribosome-recycling factor (185 aa).

The protein belongs to the RRF family.

Its subcellular location is the cytoplasm. In terms of biological role, responsible for the release of ribosomes from messenger RNA at the termination of protein biosynthesis. May increase the efficiency of translation by recycling ribosomes from one round of translation to another. This chain is Ribosome-recycling factor, found in Clostridium acetobutylicum (strain ATCC 824 / DSM 792 / JCM 1419 / IAM 19013 / LMG 5710 / NBRC 13948 / NRRL B-527 / VKM B-1787 / 2291 / W).